Consider the following 409-residue polypeptide: All trans-polyprenyl-diphosphate synthase PDSS1 (409 aa).

Isopentenyl diphosphate is bound by residues lysine 128, arginine 131, and histidine 167. Aspartate 174 and aspartate 178 together coordinate Mg(2+). Residue arginine 184 participates in isopentenyl diphosphate binding.

This sequence belongs to the FPP/GGPP synthase family. As to quaternary structure, heterotetramer composed of 2 PDSS1/DPS1 and 2 PDSS2/DLP1 subunits. Mg(2+) is required as a cofactor.

The protein localises to the mitochondrion. The catalysed reaction is 7 isopentenyl diphosphate + (2E,6E)-farnesyl diphosphate = all-trans-decaprenyl diphosphate + 7 diphosphate. It catalyses the reaction 6 isopentenyl diphosphate + (2E,6E)-farnesyl diphosphate = all-trans-nonaprenyl diphosphate + 6 diphosphate. The protein operates within cofactor biosynthesis; ubiquinone biosynthesis. Its function is as follows. Heterotetrameric enzyme that catalyzes the condensation of farnesyl diphosphate (FPP), which acts as a primer, and isopentenyl diphosphate (IPP) to produce prenyl diphosphates of varying chain lengths and participates in the determination of the side chain of ubiquinone. Supplies nona and decaprenyl diphosphate, the precursors for the side chain of the isoprenoid quinones ubiquinone-9 (Q9)and ubiquinone-10 (Q10) respectively. The enzyme adds isopentenyl diphosphate molecules sequentially to farnesyl diphosphate with trans stereochemistry. The sequence is that of All trans-polyprenyl-diphosphate synthase PDSS1 from Mus musculus (Mouse).